The primary structure comprises 268 residues: tRNA pseudouridine synthase A (268 aa).

Asp-52 (nucleophile) is an active-site residue. Tyr-110 contacts substrate.

Belongs to the tRNA pseudouridine synthase TruA family. Homodimer.

The enzyme catalyses uridine(38/39/40) in tRNA = pseudouridine(38/39/40) in tRNA. Its function is as follows. Formation of pseudouridine at positions 38, 39 and 40 in the anticodon stem and loop of transfer RNAs. The polypeptide is tRNA pseudouridine synthase A (Prochlorococcus marinus (strain MIT 9215)).